We begin with the raw amino-acid sequence, 249 residues long: Phosphate import ATP-binding protein PstB (249 aa).

An ABC transporter domain is found at Ile-4–Ile-244. Gly-36–Ser-43 contributes to the ATP binding site.

The protein belongs to the ABC transporter superfamily. Phosphate importer (TC 3.A.1.7) family. As to quaternary structure, the complex is composed of two ATP-binding proteins (PstB), two transmembrane proteins (PstC and PstA) and a solute-binding protein (PstS).

The protein resides in the cell membrane. The catalysed reaction is phosphate(out) + ATP + H2O = ADP + 2 phosphate(in) + H(+). Part of the ABC transporter complex PstSACB involved in phosphate import. Responsible for energy coupling to the transport system. This is Phosphate import ATP-binding protein PstB from Clostridium acetobutylicum (strain ATCC 824 / DSM 792 / JCM 1419 / IAM 19013 / LMG 5710 / NBRC 13948 / NRRL B-527 / VKM B-1787 / 2291 / W).